Here is a 643-residue protein sequence, read N- to C-terminus: Phosphomethylpyrimidine synthase (643 aa).

Residues Asn248, Met277, Tyr306, His342, 362–364 (SRG), 403–406 (DGLR), and Glu442 each bind substrate. His446 lines the Zn(2+) pocket. Tyr469 provides a ligand contact to substrate. His510 contributes to the Zn(2+) binding site. Residues Cys590, Cys593, and Cys598 each contribute to the [4Fe-4S] cluster site.

This sequence belongs to the ThiC family. In terms of assembly, homodimer. Requires [4Fe-4S] cluster as cofactor.

It carries out the reaction 5-amino-1-(5-phospho-beta-D-ribosyl)imidazole + S-adenosyl-L-methionine = 4-amino-2-methyl-5-(phosphooxymethyl)pyrimidine + CO + 5'-deoxyadenosine + formate + L-methionine + 3 H(+). The protein operates within cofactor biosynthesis; thiamine diphosphate biosynthesis. Its function is as follows. Catalyzes the synthesis of the hydroxymethylpyrimidine phosphate (HMP-P) moiety of thiamine from aminoimidazole ribotide (AIR) in a radical S-adenosyl-L-methionine (SAM)-dependent reaction. This Paraburkholderia xenovorans (strain LB400) protein is Phosphomethylpyrimidine synthase.